Consider the following 173-residue polypeptide: Large ribosomal subunit protein uL10 (173 aa).

Belongs to the universal ribosomal protein uL10 family. Part of the ribosomal stalk of the 50S ribosomal subunit. The N-terminus interacts with L11 and the large rRNA to form the base of the stalk. The C-terminus forms an elongated spine to which L12 dimers bind in a sequential fashion forming a multimeric L10(L12)X complex.

Its function is as follows. Forms part of the ribosomal stalk, playing a central role in the interaction of the ribosome with GTP-bound translation factors. The sequence is that of Large ribosomal subunit protein uL10 from Nitratidesulfovibrio vulgaris (strain ATCC 29579 / DSM 644 / CCUG 34227 / NCIMB 8303 / VKM B-1760 / Hildenborough) (Desulfovibrio vulgaris).